A 151-amino-acid polypeptide reads, in one-letter code: Desiccation-related protein PCC27-45 (151 aa).

This sequence belongs to the LEA type 2 family.

This chain is Desiccation-related protein PCC27-45, found in Craterostigma plantagineum (Blue gem).